We begin with the raw amino-acid sequence, 244 residues long: Protein IN2-1 homolog B (244 aa).

The interval 1–27 (MAAAAAAPASSEKEVLPPSLTSSSEPP) is disordered. Positions 32 to 113 (GTTRLYVAYH…YIDTNFEGPA (82 aa)) constitute a GST N-terminal domain. Glutathione-binding positions include Val85 and 97–98 (ES). Residues 118 to 241 (DSEKQQFAEE…FLLEHTKKRL (124 aa)) enclose the GST C-terminal domain.

This Oryza sativa subsp. indica (Rice) protein is Protein IN2-1 homolog B (GSTZ5).